We begin with the raw amino-acid sequence, 339 residues long: Transmembrane protein 120B (339 aa).

A coiled-coil region spans residues Met1–His67. 6 consecutive transmembrane segments (helical) span residues Gly102–Ala124, Phe132–His152, Val159–Ile179, Gly187–Pro207, Phe270–Phe290, and Gln302–Leu322.

It belongs to the TMEM120 family. Heterooligomer with TMEM120A. As to expression, expressed in inguinal and subcutaneous white adipose tissue and in brown adipose tissue.

It is found in the nucleus inner membrane. Its function is as follows. Necessary for efficient adipogenesis. Does not show ion channel activity. The chain is Transmembrane protein 120B from Mus musculus (Mouse).